An 879-amino-acid chain; its full sequence is Beta-alanyl-bioamine nonribosomal peptide synthetase ebony (879 aa).

An adenylation region spans residues 26-540 (FEEQQLRHAD…EHVPLLVNGK (515 aa)). Positions 573–650 (EDLKLTARDL…EIIEKMAANH (78 aa)) constitute a Carrier domain. Serine 611 is modified (O-(pantetheine 4'-phosphoryl)serine). The interval 666-679 (LKMEAVPLRLEHRQ) is condensation. Position 696 (glutamate 696) interacts with dopamine. Residue glutamate 696 coordinates histamine. Beta-alanine contacts are provided by threonine 825 and asparagine 827.

It belongs to the NRP synthetase family. The cofactor is pantetheine 4'-phosphate. Mg(2+) is required as a cofactor. As to expression, expressed in the optic neuropils in the lamina and in distinct cells at the distal border of the medulla cortex (at protein level). Expressed in the protocerebrum and thoracic ganglia (at protein level). Expressed in antennal lobes, antennal nerves and subesophagic ganglion (at protein level). Specifically, expressed in epithelial glial cells of the medulla that surround the synaptic cleft of photoreceptor axonal endings (at protein level). Expressed in some cells in the cuticle.

The protein localises to the cytoplasm. It catalyses the reaction histamine + beta-alanine + ATP = carcinine + AMP + diphosphate + H(+). It carries out the reaction beta-alanine + ATP + H(+) = beta-alanyl-5'-AMP + diphosphate. The catalysed reaction is beta-alanyl-5'-AMP + holo-[peptidyl-carrier protein] = beta-alanyl-[peptidyl-carrier protein] + AMP + H(+). The enzyme catalyses beta-alanyl-[peptidyl-carrier protein] + histamine = carcinine + holo-[peptidyl-carrier protein] + H(+). It catalyses the reaction dopamine + beta-alanine + ATP = beta-alanyl-dopamine + AMP + diphosphate + H(+). It carries out the reaction beta-alanyl-[peptidyl-carrier protein] + dopamine = beta-alanyl-dopamine + holo-[peptidyl-carrier protein] + H(+). In terms of biological role, nonribosomal peptide synthase which is required for the regulation of histamine and dopamine levels in various tissues through their condensation with beta-alanine. In epithelial glial cells, plays an essential role in the inactivation of histamine, the main neurotransmitter in the optical nerve system, by catalyzing the conversion of histamine into carcinine. In the cuticle, catalyzes the condensation of beta-alanine with dopamine to form beta-alanyl-dopamine (NBAD), a metabolite involved in the pigmentation and sclerotization of the insect cuticle. Also, regulates the cuticular hydrocarbon composition in females. Acts downstream of the body clock to regulate circadian behavioral rhythms. Can also condense beta-alanine with biogenic amines tyramine, octopamine, and serotonin in vitro. The sequence is that of Beta-alanyl-bioamine nonribosomal peptide synthetase ebony from Drosophila melanogaster (Fruit fly).